Reading from the N-terminus, the 476-residue chain is Aspartyl/glutamyl-tRNA(Asn/Gln) amidotransferase subunit B (476 aa).

It belongs to the GatB/GatE family. GatB subfamily. Heterotrimer of A, B and C subunits.

The enzyme catalyses L-glutamyl-tRNA(Gln) + L-glutamine + ATP + H2O = L-glutaminyl-tRNA(Gln) + L-glutamate + ADP + phosphate + H(+). The catalysed reaction is L-aspartyl-tRNA(Asn) + L-glutamine + ATP + H2O = L-asparaginyl-tRNA(Asn) + L-glutamate + ADP + phosphate + 2 H(+). Its function is as follows. Allows the formation of correctly charged Asn-tRNA(Asn) or Gln-tRNA(Gln) through the transamidation of misacylated Asp-tRNA(Asn) or Glu-tRNA(Gln) in organisms which lack either or both of asparaginyl-tRNA or glutaminyl-tRNA synthetases. The reaction takes place in the presence of glutamine and ATP through an activated phospho-Asp-tRNA(Asn) or phospho-Glu-tRNA(Gln). The protein is Aspartyl/glutamyl-tRNA(Asn/Gln) amidotransferase subunit B of Neisseria meningitidis serogroup C (strain 053442).